The chain runs to 236 residues: UPF0257 lipoprotein YnfC (236 aa).

The N-terminal stretch at 1-16 is a signal peptide; sequence MKYKLLPCLLAIFLTG. Cys-17 carries the N-palmitoyl cysteine lipid modification. A lipid anchor (S-diacylglycerol cysteine) is attached at Cys-17.

It belongs to the UPF0257 family.

The protein resides in the cell membrane. The sequence is that of UPF0257 lipoprotein YnfC (ynfC) from Shigella flexneri.